Here is a 367-residue protein sequence, read N- to C-terminus: C-C chemokine receptor type 6 (367 aa).

Over 1–39 (MNSTESYFGTDDYDNTEYYSIPPDHGPCSLEEVRNFTKV) the chain is Extracellular. 2 N-linked (GlcNAc...) asparagine glycosylation sites follow: Asn-2 and Asn-35. A helical transmembrane segment spans residues 40–66 (FVPIAYSLICVFGLLGNIMVVMTFAFY). Topologically, residues 67-75 (KKARSMTDV) are cytoplasmic. A helical transmembrane segment spans residues 76-96 (YLLNMAITDILFVLTLPFWAV). Topologically, residues 97-111 (THATNTWVFSDALCK) are extracellular. A disulfide bridge links Cys-110 with Cys-189. The chain crosses the membrane as a helical span at residues 112 to 133 (LMKGTYAVNFNCGMLLLACISM). The Cytoplasmic portion of the chain corresponds to 134–151 (DRYIAIVQATKSFRVRSR). Residues 152-172 (TLTHSKVICVAVWFISIIISS) traverse the membrane as a helical segment. Topologically, residues 173–203 (PTFIFNKKYELQDRDVCEPRYRSVSEPITWK) are extracellular. Residues 204–230 (LLGMGLELFFGFFTPLLFMVFCYLFII) form a helical membrane-spanning segment. Residues 231–246 (KTLVQAQNSKRHRAIR) lie on the Cytoplasmic side of the membrane. Residues 247 to 271 (VVIAVVLVFLACQIPHNMVLLVTAV) form a helical membrane-spanning segment. Over 272–295 (NTGKVGRSCSTEKVLAYTRNVAEV) the chain is Extracellular. Residues 296-313 (LAFLHCCLNPVLYAFIGQ) form a helical membrane-spanning segment. Residues 314–367 (KFRNYFMKIMKDVWCMRRKNKMPGFLCARVYSESYISRQTSETVENDNASSFTM) are Cytoplasmic-facing.

The protein belongs to the G-protein coupled receptor 1 family. Sperm. Mainly localized in the principal piece and neck region of the tail but is also found in the acrosomal region in a small percentage of sperm cells. Expressed in natural regulatory T cells (nTregs) and a subset of early thymocyte progenitor double-negative 1 (DN1) cells. Expressed in memory B cells. Expressed by IL17 producing helper T-cells (Th17), type 1 effector cells (Th1), type 2 effector cells (Th2) and regulatory T-cells (Treg) (at protein level). Expressed by Th17 cells in spleen, Peyers patches, and lamina propria of small and large intestine. Highly expressed in testis, lung, colon, and dendritic cells.

It is found in the cell membrane. The protein localises to the cell surface. Functionally, receptor for the C-C type chemokine CCL20. Binds to CCL20 and subsequently transduces a signal by increasing the intracellular calcium ion levels. Although CCL20 is its major ligand it can also act as a receptor for non-chemokine ligands such as beta-defensins. Binds to defensin DEFB1 leading to increase in intracellular calcium ions and cAMP levels. Its binding to DEFB1 is essential for the function of DEFB1 in regulating sperm motility and bactericidal activity. Binds to defensins DEFB4 and DEFB4A/B and mediates their chemotactic effects. The ligand-receptor pair CCL20-CCR6 is responsible for the chemotaxis of dendritic cells (DC), effector/memory T-cells and B-cells and plays an important role at skin and mucosal surfaces under homeostatic and inflammatory conditions, as well as in pathology, including cancer and various autoimmune diseases. CCR6-mediated signals are essential for immune responses to microbes in the intestinal mucosa and in the modulation of inflammatory responses initiated by tissue insult and trauma. CCR6 is essential for the recruitment of both the pro-inflammatory IL17 producing helper T-cells (Th17) and the regulatory T-cells (Treg) to sites of inflammation. Required for the normal migration of Th17 cells in Peyers patches and other related tissue sites of the intestine and plays a role in regulating effector T-cell balance and distribution in inflamed intestine. Plays an important role in the coordination of early thymocyte precursor migration events important for normal subsequent thymocyte precursor development, but is not required for the formation of normal thymic natural regulatory T-cells (nTregs). Required for optimal differentiation of DN2 and DN3 thymocyte precursors. Essential for B-cell localization in the subepithelial dome of Peyers-patches and for efficient B-cell isotype switching to IgA in the Peyers-patches. Essential for appropriate anatomical distribution of memory B-cells in the spleen and for the secondary recall response of memory B-cells. Positively regulates sperm motility and chemotaxis via its binding to CCL20. The chain is C-C chemokine receptor type 6 (Ccr6) from Mus musculus (Mouse).